Consider the following 197-residue polypeptide: Pyridoxal 5'-phosphate synthase subunit PdxT (197 aa).

53–55 (GES) is an L-glutamine binding site. C85 (nucleophile) is an active-site residue. L-glutamine contacts are provided by residues R114 and 142 to 143 (IR). Active-site charge relay system residues include H179 and E181.

This sequence belongs to the glutaminase PdxT/SNO family. In terms of assembly, in the presence of PdxS, forms a dodecamer of heterodimers. Only shows activity in the heterodimer.

The enzyme catalyses aldehydo-D-ribose 5-phosphate + D-glyceraldehyde 3-phosphate + L-glutamine = pyridoxal 5'-phosphate + L-glutamate + phosphate + 3 H2O + H(+). It catalyses the reaction L-glutamine + H2O = L-glutamate + NH4(+). It functions in the pathway cofactor biosynthesis; pyridoxal 5'-phosphate biosynthesis. In terms of biological role, catalyzes the hydrolysis of glutamine to glutamate and ammonia as part of the biosynthesis of pyridoxal 5'-phosphate. The resulting ammonia molecule is channeled to the active site of PdxS. This is Pyridoxal 5'-phosphate synthase subunit PdxT from Thermococcus kodakarensis (strain ATCC BAA-918 / JCM 12380 / KOD1) (Pyrococcus kodakaraensis (strain KOD1)).